The sequence spans 102 residues: Urease subunit beta (102 aa).

Belongs to the urease beta subunit family. Heterotrimer of UreA (gamma), UreB (beta) and UreC (alpha) subunits. Three heterotrimers associate to form the active enzyme.

The protein resides in the cytoplasm. The enzyme catalyses urea + 2 H2O + H(+) = hydrogencarbonate + 2 NH4(+). Its pathway is nitrogen metabolism; urea degradation; CO(2) and NH(3) from urea (urease route): step 1/1. The sequence is that of Urease subunit beta from Blochmanniella pennsylvanica (strain BPEN).